Consider the following 129-residue polypeptide: Small ribosomal subunit protein uS9 (129 aa).

It belongs to the universal ribosomal protein uS9 family.

This Chlorobium chlorochromatii (strain CaD3) protein is Small ribosomal subunit protein uS9.